Reading from the N-terminus, the 351-residue chain is Auxin-responsive protein IAA27 (351 aa).

Positions 1–37 (MMNLISFETPPLGRRSQDGGSSSSSITAATTTTNKAK) are disordered. Low complexity predominate over residues 21-34 (SSSSSITAATTTTN). The region spanning 233–327 (NMFAKVHMDG…SAKRLYIAKN (95 aa)) is the PB1 domain.

Belongs to the Aux/IAA family. Homodimers and heterodimers. Expressed in roots and seedlings.

The protein resides in the nucleus. Functionally, aux/IAA proteins are short-lived transcriptional factors that function as repressors of early auxin response genes at low auxin concentrations. This is Auxin-responsive protein IAA27 (IAA27) from Oryza sativa subsp. japonica (Rice).